Reading from the N-terminus, the 440-residue chain is IAA-amino acid hydrolase ILR1-like 4 (440 aa).

A signal peptide spans 1–23 (MSFFKWVSFVLILHLLNPTLISC). Residues C134, H136, E170, H194, and H397 each coordinate Mn(2+). The Prevents secretion from ER motif lies at 437-440 (KDEL).

The protein belongs to the peptidase M20 family. It depends on Mn(2+) as a cofactor. In terms of tissue distribution, expressed in leaves, stems, roots, siliques and flowers. Detected in the vascular tissue of cotyledons and roots, in adult leaves, stems, siliques, petals, hydathodes and in silique abscission zones and funicles.

Its subcellular location is the endoplasmic reticulum lumen. It catalyses the reaction a jasmonyl-L-amino acid + H2O = a jasmonate + an L-alpha-amino acid. Functionally, hydrolyzes certain amino acid conjugates of the plant growth regulator indole-3-acetic acid (IAA), including IAA-Ala, IAA-Asn, IAA-Cys, IAA-Glu, IAA-Met, IAA-Ser and IAA-Gly. Has a lower efficiency with IAA-Phe, IAA-Leu and IAA-Val and no activity with IAA-Ile. Important for IAA-Leu hydrolysis in roots. Also hydrolyzes amino acid conjugates of jasmonic acid and 12-hydroxy jasmonic acid. In Arabidopsis thaliana (Mouse-ear cress), this protein is IAA-amino acid hydrolase ILR1-like 4.